Consider the following 884-residue polypeptide: MATGRSTSTESSEKTCQQRDPLPEYRALCGTDGDAAEILTDVLTNTDSDGVVFCLAHNCYSYNIGGGEALLTLCLPAKRPWGAEKCLPVIQFRCDASRAQEFLFQGRPIPVRYIQTNLNHRAVKKFFKPILSVLTCSDKKGGGGEGAHADLKSTIFWFRAKFVAAVRKTFKITASPFWMISTFGCTEAQFVLVSSCYFFERHECTIDTLSHLSRLFDGSRGRQLTTVNTFSDLAGMFGTSAWLGRVPEFSAYVGKKLARDDLESAAVDEAVNAFRGQLMLSNADLIHYIYLSFFQCLNKEKFLEYSLRTNPHNIDGVPPEEPIITGFIDEGFKSKMATYYTKSSYLKNHVRVGSLYLDGVEGYSPEAIEAGPPAAAGGGGGADRYWAGQSRDVQGLLSDILADHPASRLSPDLHGLLDLAALGDSSGVAGGVKDSLFPEPLRCPVYRCQYLNKTFFAVVTRDNLARAWERAVQLPTQVTGWEGMEDARLTACVHYAELAFSLGHLREQLSVSRHEYFNPRLPVFNLVLDFDLPLKKPGLSLERVYSICRSVRSDVLSVLGVLGEVDEAAHPVYFFKSACPRPEWDEPYAGRPFCTCDAKLGLRIITPLPRGVAIVGGAPLVALAKILNRMIKMNREDLLEICPGLPDADGPLDTGIYHRGRCVRLPHTYKVNEACGLERLLRLFVCHPGSPDKAAYIRDAMTLRNLLHHSKSAYWEGNAREGVSEEAPQKTKVVYSVTDVSENFLVCQTQQQLPRSYERPDSRIETMTGRDLVTWVTEVAWPKVFHNIKAYIPDDKTTQFHFVKFIHTSHNIIQVKPQRGNNFVCISSNHRNKTQSVRIFIVLYTNKKDEVTITLMSQCFAHKCNSNKPRAHFSIPLQLRGRDF.

The segment at 825-864 (CISSNHRNKTQSVRIFIVLYTNKKDEVTITLMSQCFAHKC) adopts a CHC2-type zinc-finger fold.

It belongs to the herpesviridae DNA primase family. In terms of assembly, associates with the helicase and the primase-associated factor to form the helicase-primase factor.

The protein localises to the host nucleus. Functionally, essential component of the helicase/primase complex. Unwinds the DNA at the replication forks and generates single-stranded DNA for both leading and lagging strand synthesis. The primase initiates primer synthesis and thereby produces large amount of short RNA primers on the lagging strand that the polymerase elongates using dNTPs. The polypeptide is DNA primase (56) (Equine herpesvirus 2 (strain 86/87) (EHV-2)).